We begin with the raw amino-acid sequence, 860 residues long: MSNSLPVPMSLNEYLAHLPMSDEQRAELAGCTTFAELHERLSAQPVTDPAEAAQASVGRRLTLTTADQLEDAEMLGVDASGRLCLKATPPIRRTKVVPEPWRTNILVRGWRRLTGKGNPPKPEHDDLPRDLPKARWRTVGSIRRYILLILMLGQTIVAGWYMKGILPYQGWSLVSLDEITRQTFVQTALQVMPYALQTSILLLFGILFCWVSAGFWTALMGFLELLTGRDKYRISGASAGNEPIEKGARTALVMPICNEDVPRVFAGLRATFESVAATGDLDRFDFFVLSDTNETDIAVAEQQAWLDVCRETKGFGKIFYRRRRRRVKRKSGNLDDFCRRWGGDYRYMVVLDADSVMSGECLTSLVRLMEATPDAGIIQTAPRASGMDTLYARMQQFATRVYGPLFTAGLHFWQLGESHYWGHNAIIRMKPFIEHCALAPLPGKGAFAGAILSHDFVEAALMRRAGWGVWIAYDLPGSYEELPPNLLDELKRDRRWCHGNLMNFRLFLVKGMHPVHRAVFLTGVMSYLSAPLWFFFLVLSTALLAVNTLMEPTYFLEPRQLYPLWPQWHPEKAVALFSTTIVLLFLPKLLSVILIWAKGAKGFGGKFKVTVSMLLEMLFSVLLAPVRMLFHTRFVLAAFLGWAATWNSPQRDDDSTPWIEAVKRHGPQTLLGACWALLVFWLNPSFLWWLAPIVVSLMLSIPVSVISSRTNLGVKARDEKFFLIPEEFEPPQELISTDRYTYENRWHALKQGFIRAVVDPRQNALACALATSRHRQAQPIEVVRMERVDQALKVGPAKLGNQERLMLLSDPVALGRLHERVWSEGHEEWLAAWRASIEADPHAPLLPLQPEGKASEPVPV.

The next 6 helical transmembrane spans lie at 146–166 (ILLI…KGIL), 200–220 (ILLL…TALM), 519–539 (VFLT…FLVL), 576–596 (LFST…ILIW), 610–630 (TVSM…RMLF), and 686–706 (FLWW…VSVI).

It belongs to the glycosyltransferase 2 family. OpgH subfamily.

Its subcellular location is the cell inner membrane. The protein operates within glycan metabolism; osmoregulated periplasmic glucan (OPG) biosynthesis. Its function is as follows. Involved in the biosynthesis of osmoregulated periplasmic glucans (OPGs). This is Glucans biosynthesis glucosyltransferase H from Pseudomonas syringae pv. syringae (strain B728a).